The chain runs to 345 residues: Leucine-rich repeat and transmembrane domain-containing protein 1 (345 aa).

The N-terminal stretch at 1 to 27 (MKGELLLFSSVIVLLQVVCSCPDKCYC) is a signal peptide. The LRRNT domain occupies 28–50 (QSSTNFVDCSQQGLAEIPSHLPP). At 28–288 (QSSTNFVDCS…PANLRHAIAT (261 aa)) the chain is on the extracellular side. LRR repeat units follow at residues 51–72 (QTRTLHLQDNQIHHLPAFAFRS), 75–96 (WLMTLNLSNNSLSNLAPGAFHG), 99–120 (HLQVLNLTQNSLLSLESRLFHS), 123–144 (QLRELDLSSNNISHLPTSLGET), and 147–168 (NLTILAVQQNQLQQLDRALLES). Asn104 carries an N-linked (GlcNAc...) asparagine glycan. Asn147 is a glycosylation site (N-linked (GlcNAc...) asparagine). Residues 180–234 (NLWKCNCHLLGLKLWLEKFVYKGGLTDGIICESPDTWKGKDLLRIPHELYQPCPL) form the LRRCT domain. Residues 289–309 (VIITGVVCGIVCLMMLAAAIY) traverse the membrane as a helical segment. Residues 310-345 (GCTYAAITAQYHGGPLAQTNDPGKVEEKERFDSSPA) are Cytoplasmic-facing. A disordered region spans residues 326–345 (AQTNDPGKVEEKERFDSSPA). Over residues 332-345 (GKVEEKERFDSSPA) the composition is skewed to basic and acidic residues.

It is found in the membrane. The protein is Leucine-rich repeat and transmembrane domain-containing protein 1 (LRTM1) of Homo sapiens (Human).